A 363-amino-acid polypeptide reads, in one-letter code: Putative aryl-alcohol dehydrogenase AAD3 (363 aa).

This sequence belongs to the aldo/keto reductase family. Aldo/keto reductase 2 subfamily.

The protein is Putative aryl-alcohol dehydrogenase AAD3 (AAD3) of Saccharomyces cerevisiae (strain ATCC 204508 / S288c) (Baker's yeast).